The primary structure comprises 121 residues: NADH-quinone oxidoreductase subunit A 1 (121 aa).

The next 3 membrane-spanning stretches (helical) occupy residues 11 to 31 (IAIF…APFA), 65 to 85 (LVSI…PWAV), and 90 to 110 (MGWF…VGFI).

Belongs to the complex I subunit 3 family. In terms of assembly, NDH-1 is composed of 14 different subunits. Subunits NuoA, H, J, K, L, M, N constitute the membrane sector of the complex.

It localises to the cell inner membrane. It catalyses the reaction a quinone + NADH + 5 H(+)(in) = a quinol + NAD(+) + 4 H(+)(out). Functionally, NDH-1 shuttles electrons from NADH, via FMN and iron-sulfur (Fe-S) centers, to quinones in the respiratory chain. The immediate electron acceptor for the enzyme in this species is believed to be ubiquinone. Couples the redox reaction to proton translocation (for every two electrons transferred, four hydrogen ions are translocated across the cytoplasmic membrane), and thus conserves the redox energy in a proton gradient. The polypeptide is NADH-quinone oxidoreductase subunit A 1 (Rhizobium meliloti (strain 1021) (Ensifer meliloti)).